The primary structure comprises 789 residues: Ent-kaurene synthase TSP4, chloroplastic (789 aa).

Positions 540 and 544 each coordinate Mg(2+). A DDXXD motif motif is present at residues 540–544 (DDFFD). A helical transmembrane segment spans residues 638–656 (AYVSFALGPIVLPALYLVG). Positions 684, 687, and 692 each coordinate Mg(2+).

This sequence belongs to the terpene synthase family. Mg(2+) is required as a cofactor. Expressed in leaves and fruits, including trichomes.

It is found in the plastid. The protein resides in the chloroplast membrane. The enzyme catalyses ent-copalyl diphosphate = ent-kaur-16-ene + diphosphate. Its pathway is plant hormone biosynthesis; gibberellin biosynthesis. Involved in the biosynthesis of labdane-type diterpenoid including cleroda-dienols, and peregrinol lactones and furan derivatives, dopaminergic diterpenoids that can bind to dopamine receptors in the human pituitary gland, have probably ability to lower prolactin levels, and are used to treat menstrual cycle disorders (e.g. premenstrual syndrome and mastodynia). Terpene synthase that produces ent-kaurene from ent-copalyl diphosphate. This Vitex agnus-castus (Chaste tree) protein is Ent-kaurene synthase TSP4, chloroplastic.